We begin with the raw amino-acid sequence, 390 residues long: GLH-binding kinase 1 (390 aa).

The Protein kinase domain occupies tyrosine 38–valine 338. ATP is bound by residues leucine 44 to valine 52 and lysine 67. The active-site Proton acceptor is the aspartate 164. Serine 198 is subject to Phosphoserine. Tyrosine 200 is subject to Phosphotyrosine.

Belongs to the protein kinase superfamily. CMGC Ser/Thr protein kinase family. MAP kinase subfamily. In terms of assembly, interacts with glh-1, glh-2 (via C-terminus), glh-3 (via C-terminus) and glh-4 (via C-terminus). Interacts with csn-5; the interaction may prevent glh-1 degradation induced by kgb-1. Interacts with fos-1. It depends on Mg(2+) as a cofactor. May be phosphorylated by mek-1 on Ser-198 and/or Tyr-200. Phosphorylation is induced upon Cu(2+) and arsenite-mediated cell stimulation and by fasting. In terms of tissue distribution, expressed in somatic and germline tissues.

It localises to the cytoplasm. It catalyses the reaction L-seryl-[protein] + ATP = O-phospho-L-seryl-[protein] + ADP + H(+). The enzyme catalyses L-threonyl-[protein] + ATP = O-phospho-L-threonyl-[protein] + ADP + H(+). With respect to regulation, activated by mek-1 mediated phosphorylation. No differences in basal activation between larvae and adults. Inhibited by phosphatase vhp-1. In terms of biological role, mitogen-activated protein kinase which is an essential component of the JNK pathway composed of mlk-1, mek-1 and kgb-1. Phosphorylates the transcription factor fos-1 which prevents fos-1 dimerization and promoter binding and results in activation of target genes including F53A9.2/kreg-1 and lys-3/kreg-2. Phosphorylates jun-1 and activates the AP-1 transcription factor which is a heterodimer of jun-1 and fos-1. Phosphorylates glh-1 in vitro which may play a role in controlling glh-1 protein levels in the germline by targeting it for degradation by the proteasome. Required for oogenesis and probably also for spermatogenesis. Involved in the response to environmental stress such as heavy metals, infection and protein folding stress in an age-dependent manner. In larvae, has a protective role which becomes detrimental in adults. May control susceptibility to infection, heavy metal stress and premature lethality by regulating daf-16 cellular localization. Involved in the transcriptional response to bacterial pore-forming toxins and to fasting. Required for fasting-induced longevity. Involved in axon regeneration after injury downstream of tyrosine receptor svh-2. The chain is GLH-binding kinase 1 from Caenorhabditis elegans.